The sequence spans 350 residues: Eukaryotic translation initiation factor 3 subunit I (350 aa).

WD repeat units lie at residues 8 to 49 (GHER…GTLE), 51 to 89 (HQGV…CVFT), 91 to 135 (ESPS…ESLT), 149 to 188 (QDGA…AVNS), 198 to 240 (EKNV…KVYK), and 296 to 335 (GHFG…FDFY).

It belongs to the eIF-3 subunit I family. As to quaternary structure, component of the eukaryotic translation initiation factor 3 (eIF-3) complex.

The protein resides in the cytoplasm. Its function is as follows. Component of the eukaryotic translation initiation factor 3 (eIF-3) complex, which is involved in protein synthesis of a specialized repertoire of mRNAs and, together with other initiation factors, stimulates binding of mRNA and methionyl-tRNAi to the 40S ribosome. The eIF-3 complex specifically targets and initiates translation of a subset of mRNAs involved in cell proliferation. In Scheffersomyces stipitis (strain ATCC 58785 / CBS 6054 / NBRC 10063 / NRRL Y-11545) (Yeast), this protein is Eukaryotic translation initiation factor 3 subunit I.